A 252-amino-acid polypeptide reads, in one-letter code: tRNA1(Val) (adenine(37)-N6)-methyltransferase (252 aa).

This sequence belongs to the methyltransferase superfamily. tRNA (adenine-N(6)-)-methyltransferase family.

It is found in the cytoplasm. It carries out the reaction adenosine(37) in tRNA1(Val) + S-adenosyl-L-methionine = N(6)-methyladenosine(37) in tRNA1(Val) + S-adenosyl-L-homocysteine + H(+). Specifically methylates the adenine in position 37 of tRNA(1)(Val) (anticodon cmo5UAC). This chain is tRNA1(Val) (adenine(37)-N6)-methyltransferase, found in Yersinia pseudotuberculosis serotype IB (strain PB1/+).